Consider the following 415-residue polypeptide: MKNVIGLILAGGQGTRLGVLTEKIPKPAVQFGGKYRIIDFTLSNCVNSGIYRIGVLTQYRPHLLNKHIGIGKPWDLDRKGGGVTILQPYSTLTESVWYKGTADAVYQNIEFVDEYNPEYIVVLSGDHIYSMDYSEFVYYHISKGALATIACMEVPITEAHRFGIMVTDIENKIIEFQEKPKNPKSNLASLGIYVFTWNFIKEVLIEDSKDNSSDHDFGKNIIPKILSTGKVYAYPFEGYWQDVGTIQSYWETNLELVRPIPPFNLHDPNWRFYTRSEEMNPAYISENGNVRNSIISEGCEIYGSVENSVISQGVFIDEGAIVKNSVIMTKVEVGKNVIIEDAIIAENTIIKDGCKIGVGHFAESKYDKKVYNSPITVVGMDSIVEENCKIGKNVVIGNDKIVSANTVIDSGGYLI.

Alpha-D-glucose 1-phosphate-binding positions include Tyr98, Gly163, 178-179, and Ser189; that span reads EK.

Belongs to the bacterial/plant glucose-1-phosphate adenylyltransferase family. Homotetramer.

The enzyme catalyses alpha-D-glucose 1-phosphate + ATP + H(+) = ADP-alpha-D-glucose + diphosphate. It participates in glycan biosynthesis; glycogen biosynthesis. In terms of biological role, involved in the biosynthesis of ADP-glucose, a building block required for the elongation reactions to produce glycogen. Catalyzes the reaction between ATP and alpha-D-glucose 1-phosphate (G1P) to produce pyrophosphate and ADP-Glc. This is Glucose-1-phosphate adenylyltransferase from Fervidobacterium nodosum (strain ATCC 35602 / DSM 5306 / Rt17-B1).